Reading from the N-terminus, the 821-residue chain is Integrator complex assembly factor BRAT1 (821 aa).

The interval 100–200 (PGLFGEPGPL…WPACAQKIMD (101 aa)) is required for interaction with NDFIP1. HEAT repeat units follow at residues 495 to 531 (PQFL…SRHW) and 544 to 576 (SEVP…SSQG). Residues 741 to 767 (GSPNTASAEATLPRWRAGEQAQPPGDQ) form a disordered region. Ser-742 is modified (phosphoserine). The short motif at 819 to 821 (DCY) is the BRAT1-like motif element. Cys-820 lines the Zn(2+) pocket.

This sequence belongs to the BRAT1 family. Part of the multiprotein complex composed of BRAT1, WDR73, as well as integrator complex subunits INTS9 and INTS11. Interacts with BRCA1 and ATM. Interacts with MTOR and RPTOR. Interacts with NDFIP1. Interacts with SMC1A and PRKDC. Ubiquitinated by NEDD4, NEDD4L and ITCH; mono- and polyubiquitinated forms are detected. In terms of tissue distribution, ubiquitously expressed.

It localises to the nucleus. The protein localises to the cytoplasm. Component of a multiprotein complex required for the assembly of the RNA endonuclease module of the integrator complex. Associates with INTS9 and INTS11 in the cytoplasm and blocks the active site of INTS11 to inhibit the endonuclease activity of INTS11 before formation of the full integrator complex. Following dissociation of WDR73 of the complex, BRAT1 facilitates the nuclear import of the INTS9-INTS11 heterodimer. In the nucleus, INTS4 is integrated to the INTS9-INTS11 heterodimer and BRAT1 is released from the mature RNA endonuclease module by inositol hexakisphosphate (InsP6). BRAT1 is also involved in DNA damage response; activates kinases ATM, SMC1A and PRKDC by modulating their phosphorylation status following ionizing radiation (IR) stress. Plays a role in regulating mitochondrial function and cell proliferation. Required for protein stability of MTOR and MTOR-related proteins, and cell cycle progress by growth factors. This chain is Integrator complex assembly factor BRAT1, found in Homo sapiens (Human).